Here is a 183-residue protein sequence, read N- to C-terminus: Small ribosomal subunit protein uS4c (183 aa).

The 62-residue stretch at 82-143 (MRLDNILFRL…KQRSKALIQN (62 aa)) folds into the S4 RNA-binding domain.

The protein belongs to the universal ribosomal protein uS4 family. In terms of assembly, part of the 30S ribosomal subunit. Contacts protein S5. The interaction surface between S4 and S5 is involved in control of translational fidelity.

It localises to the plastid. It is found in the chloroplast. Its function is as follows. One of the primary rRNA binding proteins, it binds directly to 16S rRNA where it nucleates assembly of the body of the 30S subunit. Functionally, with S5 and S12 plays an important role in translational accuracy. The polypeptide is Small ribosomal subunit protein uS4c (rps4) (Freesia sp. (strain Lejeune 1997)).